Reading from the N-terminus, the 100-residue chain is Large ribosomal subunit protein uL23 (100 aa).

The protein belongs to the universal ribosomal protein uL23 family. In terms of assembly, part of the 50S ribosomal subunit. Contacts protein L29, and trigger factor when it is bound to the ribosome.

In terms of biological role, one of the early assembly proteins it binds 23S rRNA. One of the proteins that surrounds the polypeptide exit tunnel on the outside of the ribosome. Forms the main docking site for trigger factor binding to the ribosome. This chain is Large ribosomal subunit protein uL23, found in Vibrio vulnificus (strain CMCP6).